We begin with the raw amino-acid sequence, 479 residues long: Aspartyl/glutamyl-tRNA(Asn/Gln) amidotransferase subunit B (479 aa).

Belongs to the GatB/GatE family. GatB subfamily. As to quaternary structure, heterotrimer of A, B and C subunits.

The catalysed reaction is L-glutamyl-tRNA(Gln) + L-glutamine + ATP + H2O = L-glutaminyl-tRNA(Gln) + L-glutamate + ADP + phosphate + H(+). It carries out the reaction L-aspartyl-tRNA(Asn) + L-glutamine + ATP + H2O = L-asparaginyl-tRNA(Asn) + L-glutamate + ADP + phosphate + 2 H(+). In terms of biological role, allows the formation of correctly charged Asn-tRNA(Asn) or Gln-tRNA(Gln) through the transamidation of misacylated Asp-tRNA(Asn) or Glu-tRNA(Gln) in organisms which lack either or both of asparaginyl-tRNA or glutaminyl-tRNA synthetases. The reaction takes place in the presence of glutamine and ATP through an activated phospho-Asp-tRNA(Asn) or phospho-Glu-tRNA(Gln). This is Aspartyl/glutamyl-tRNA(Asn/Gln) amidotransferase subunit B from Streptococcus pyogenes serotype M49 (strain NZ131).